We begin with the raw amino-acid sequence, 100 residues long: UPF0213 protein YhbQ (100 aa).

The GIY-YIG domain occupies 2–77; it reads TPWFLYLIRT…KQLTKRQKER (76 aa).

The protein belongs to the UPF0213 family.

In Escherichia fergusonii (strain ATCC 35469 / DSM 13698 / CCUG 18766 / IAM 14443 / JCM 21226 / LMG 7866 / NBRC 102419 / NCTC 12128 / CDC 0568-73), this protein is UPF0213 protein YhbQ.